The following is a 179-amino-acid chain: Protein PLASTID REDOX INSENSITIVE 2, chloroplastic (179 aa).

The transit peptide at 1–69 directs the protein to the chloroplast; the sequence is MASMHEALFS…SLSRRGFVCR (69 aa).

In terms of assembly, binds DNA when in complex with CSP41b.

It is found in the plastid. The protein localises to the chloroplast stroma. It localises to the chloroplast nucleoid. Its function is as follows. Involved in redox-mediated retrograde signaling to synchronize the expression of photosynthetic genes from both the nuclear and plastidic genomes, especially in excess light conditions. Required for full expression of genes transcribed by the plastid-encoded RNA polymerase (PEP). Essential for embryo development. The protein is Protein PLASTID REDOX INSENSITIVE 2, chloroplastic of Arabidopsis thaliana (Mouse-ear cress).